We begin with the raw amino-acid sequence, 355 residues long: Protein HGH1 homolog (355 aa).

The tract at residues 324–355 (DEEGDPTPEEIEQMNKKQKLEDEDAQFETDEI) is disordered. Acidic residues-rich tracts occupy residues 325–335 (EEGDPTPEEIE) and 344–355 (EDEDAQFETDEI).

This sequence belongs to the HGH1 family.

The polypeptide is Protein HGH1 homolog (Dictyostelium discoideum (Social amoeba)).